Reading from the N-terminus, the 257-residue chain is Probable enoyl-CoA hydratase (257 aa).

This sequence belongs to the enoyl-CoA hydratase/isomerase family.

The enzyme catalyses a (3S)-3-hydroxyacyl-CoA = a (2E)-enoyl-CoA + H2O. It catalyses the reaction a 4-saturated-(3S)-3-hydroxyacyl-CoA = a (3E)-enoyl-CoA + H2O. In terms of biological role, could possibly oxidize fatty acids using specific components. This Rhodobacter capsulatus (strain ATCC BAA-309 / NBRC 16581 / SB1003) protein is Probable enoyl-CoA hydratase (fadB1).